A 425-amino-acid polypeptide reads, in one-letter code: MKTVIKNGTVYQNGRLIHADVLIEDQKIKVIGTNLTGDKEFDATGKLVAPGLVDVHVHYREPGQTYKEDIRTGSEAAARGGFTTVGAMPNVTPVPNTPELMEKMVKKNQEKGIVHIFQYGPITNDETTDIIPDYAALKKAGAFALSNDGHGVQTAQTMYLAMQKAKANNLIIATHAQDDSLFNHGIVNEGKKAEELNLPPVTELAETTQIARDLLLAQKTGVHYHICHVSTKTSVELVRMAKARGINVTCEVAPHHILLTDDDIPKDNGYYKMNPPLRNKEDQAALLVGLLDGTIDLIATDHAPHAKKEKQGGMKGAAFGITGSETAFSTLYTKFVKKDKVFTLEQLLSWLSDKPAEAFGLKDAGVLEPGKNADIAIFDIEHEATIEEKDYKSKGVNTPFTGQKVYGETVMTMVNGKVVYQRGTK.

Residues H56 and H58 each contribute to the Zn(2+) site. Substrate is bound by residues 58-60 (HYR) and N90. Residues D148, H175, and H228 each coordinate Zn(2+). N274 provides a ligand contact to substrate. D301 contacts Zn(2+). D301 is an active-site residue. Substrate-binding positions include H305 and 319 to 320 (FG).

Belongs to the metallo-dependent hydrolases superfamily. DHOase family. Class I DHOase subfamily. It depends on Zn(2+) as a cofactor.

It catalyses the reaction (S)-dihydroorotate + H2O = N-carbamoyl-L-aspartate + H(+). The protein operates within pyrimidine metabolism; UMP biosynthesis via de novo pathway; (S)-dihydroorotate from bicarbonate: step 3/3. Its function is as follows. Catalyzes the reversible cyclization of carbamoyl aspartate to dihydroorotate. In Lactobacillus acidophilus (strain ATCC 700396 / NCK56 / N2 / NCFM), this protein is Dihydroorotase.